Consider the following 491-residue polypeptide: Trigger factor (491 aa).

Residues 169–254 (GDRVTIDYLG…VKDVAAAAPI (86 aa)) form the PPIase FKBP-type domain. The interval 433–491 (KTVSKDELMAEDEAEDKPAKKAPAKKKAAAKAEAGEGEEAAAPKKKAPAKKKAADDSAE) is disordered. The span at 452–461 (KKAPAKKKAA) shows a compositional bias: basic residues.

It belongs to the FKBP-type PPIase family. Tig subfamily.

Its subcellular location is the cytoplasm. The enzyme catalyses [protein]-peptidylproline (omega=180) = [protein]-peptidylproline (omega=0). Functionally, involved in protein export. Acts as a chaperone by maintaining the newly synthesized protein in an open conformation. Functions as a peptidyl-prolyl cis-trans isomerase. The sequence is that of Trigger factor from Sinorhizobium fredii (strain NBRC 101917 / NGR234).